We begin with the raw amino-acid sequence, 367 residues long: Undecaprenyl-phosphate alpha-N-acetylglucosaminyl 1-phosphate transferase (367 aa).

9 helical membrane-spanning segments follow: residues 3–23, 45–65, 69–89, 129–149, 158–178, 187–207, 213–233, 242–262, and 318–338; these read LLTALSELISIFLFTTIFIFL, GVIPLVGGISVFAGICFMFGL, YIPHLSLYLICAGVLVFVGAM, WELVLGPFGYFLTLFAVWAAI, IDGLLGGLSSVSFAAMGLILW, MWCFAMIAAILPYIMLNLGIL, VFMGDAGSTLIGFTVIWLLLE, ISPVTALWIIAIPLMDMVAIM, and VPEWVMLVLFLLAFFLYGYCI.

The protein belongs to the glycosyltransferase 4 family. WecA subfamily. The cofactor is Mg(2+). It depends on Mn(2+) as a cofactor.

The protein localises to the cell inner membrane. The enzyme catalyses di-trans,octa-cis-undecaprenyl phosphate + UDP-N-acetyl-alpha-D-glucosamine = N-acetyl-alpha-D-glucosaminyl-di-trans,octa-cis-undecaprenyl diphosphate + UMP. It participates in bacterial outer membrane biogenesis; LPS O-antigen biosynthesis. Its pathway is bacterial outer membrane biogenesis; enterobacterial common antigen biosynthesis. Functionally, catalyzes the transfer of the GlcNAc-1-phosphate moiety from UDP-GlcNAc onto the carrier lipid undecaprenyl phosphate (C55-P), yielding GlcNAc-pyrophosphoryl-undecaprenyl (GlcNAc-PP-C55). The chain is Undecaprenyl-phosphate alpha-N-acetylglucosaminyl 1-phosphate transferase from Salmonella typhi.